The chain runs to 144 residues: Large ribosomal subunit protein uL11 (144 aa).

This sequence belongs to the universal ribosomal protein uL11 family. Part of the ribosomal stalk of the 50S ribosomal subunit. Interacts with L10 and the large rRNA to form the base of the stalk. L10 forms an elongated spine to which L12 dimers bind in a sequential fashion forming a multimeric L10(L12)X complex. Post-translationally, one or more lysine residues are methylated.

Functionally, forms part of the ribosomal stalk which helps the ribosome interact with GTP-bound translation factors. The protein is Large ribosomal subunit protein uL11 of Streptomyces avermitilis (strain ATCC 31267 / DSM 46492 / JCM 5070 / NBRC 14893 / NCIMB 12804 / NRRL 8165 / MA-4680).